The following is a 203-amino-acid chain: Recombination protein RecR (203 aa).

The C4-type zinc finger occupies 56-71 (CAVCGNVSDNERCRIC). Positions 79–179 (SVVCIVEEPK…TVTRIASGLP (101 aa)) constitute a Toprim domain.

It belongs to the RecR family.

In terms of biological role, may play a role in DNA repair. It seems to be involved in an RecBC-independent recombinational process of DNA repair. It may act with RecF and RecO. The protein is Recombination protein RecR of Mycobacterium bovis (strain ATCC BAA-935 / AF2122/97).